A 151-amino-acid chain; its full sequence is Acidic phospholipase A2 1 (151 aa).

Residues 1–27 (MYPAHLLVLLAVCVSLLGAASIPARPL) form the signal peptide. Intrachain disulfides connect cysteine 38–cysteine 104, cysteine 54–cysteine 151, cysteine 56–cysteine 72, cysteine 71–cysteine 132, cysteine 78–cysteine 125, cysteine 88–cysteine 118, and cysteine 111–cysteine 123. Positions 55, 57, and 59 each coordinate Ca(2+). Histidine 75 is an active-site residue. Aspartate 76 lines the Ca(2+) pocket. Aspartate 126 is an active-site residue.

Belongs to the phospholipase A2 family. Group I subfamily. D49 sub-subfamily. The cofactor is Ca(2+). Expressed by the venom gland.

The protein resides in the secreted. The catalysed reaction is a 1,2-diacyl-sn-glycero-3-phosphocholine + H2O = a 1-acyl-sn-glycero-3-phosphocholine + a fatty acid + H(+). Its function is as follows. PLA2 catalyzes the calcium-dependent hydrolysis of the 2-acyl groups in 3-sn-phosphoglycerides. The polypeptide is Acidic phospholipase A2 1 (Tropidechis carinatus (Australian rough-scaled snake)).